The sequence spans 147 residues: Allograft inflammatory factor 1 (147 aa).

Ser2 is modified (N-acetylserine). Lys11 is subject to N6-acetyllysine. Ser39 is modified (phosphoserine). One can recognise an EF-hand 1 domain in the interval 45–80 (SKLEGFKEKYMEFDLNGNGDIDIMSLKRMLEKLGVP). Positions 58, 60, 62, 64, 100, and 105 each coordinate Ca(2+). The EF-hand 2; degenerate domain occupies 81–115 (KTHLELKKLIGEVSSGSGETFSYPDFLRMMLGKRS). Residues 128–147 (AREKEKPTGPPAKKAISELP) are disordered.

In terms of assembly, homodimer (Potential). Monomer. Interacts with LCP1. Post-translationally, phosphorylated on serine residues. In terms of tissue distribution, detected in T-lymphocytes and peripheral blood mononuclear cells.

It localises to the cytoplasm. It is found in the cytoskeleton. The protein resides in the cell projection. Its subcellular location is the ruffle membrane. The protein localises to the phagocytic cup. In terms of biological role, actin-binding protein that enhances membrane ruffling and RAC activation. Enhances the actin-bundling activity of LCP1. Binds calcium. Plays a role in RAC signaling and in phagocytosis. May play a role in macrophage activation and function. Promotes the proliferation of vascular smooth muscle cells and of T-lymphocytes. Enhances lymphocyte migration. Plays a role in vascular inflammation. The polypeptide is Allograft inflammatory factor 1 (AIF1) (Homo sapiens (Human)).